Reading from the N-terminus, the 124-residue chain is Small ribosomal subunit protein uS12 (124 aa).

Positions 1–32 (MPTIQQLVRKGRQDKVEKTKTPALKGSPQRRG) are disordered. A compositionally biased stretch (basic and acidic residues) spans 11-20 (GRQDKVEKTK). At Asp-89 the chain carries 3-methylthioaspartic acid.

This sequence belongs to the universal ribosomal protein uS12 family. Part of the 30S ribosomal subunit. Contacts proteins S8 and S17. May interact with IF1 in the 30S initiation complex.

Its function is as follows. With S4 and S5 plays an important role in translational accuracy. In terms of biological role, interacts with and stabilizes bases of the 16S rRNA that are involved in tRNA selection in the A site and with the mRNA backbone. Located at the interface of the 30S and 50S subunits, it traverses the body of the 30S subunit contacting proteins on the other side and probably holding the rRNA structure together. The combined cluster of proteins S8, S12 and S17 appears to hold together the shoulder and platform of the 30S subunit. In Frankia alni (strain DSM 45986 / CECT 9034 / ACN14a), this protein is Small ribosomal subunit protein uS12.